Reading from the N-terminus, the 309-residue chain is NmrA-like family domain-containing protein 1 (309 aa).

NADP(+) is bound by residues 11–16 (GATGAQ), 37–41 (RNPEQ), 58–59 (DQ), 79–81 (TNY), K102, K143, and 165–168 (YFEN). Residues 163 to 199 (PCYFENLLSYFLPQKAADGKSFLLDLPMGDVPMDGMS) are interaction with ASS1.

This sequence belongs to the NmrA-type oxidoreductase family. Homodimer. Interacts with ASS1. Interaction is enhanced by low NADPH/NADP(+) ratios, which results in inhibition of ASS1 activity.

It is found in the cytoplasm. The protein resides in the perinuclear region. It localises to the nucleus. Functionally, redox sensor protein. Undergoes restructuring and subcellular redistribution in response to changes in intracellular NADPH/NADP(+) levels. At low NADPH concentrations the protein is found mainly as a monomer, and binds argininosuccinate synthase (ASS1), the enzyme involved in nitric oxide synthesis. Association with ASS1 impairs its activity and reduces the production of nitric oxide, which subsecuently prevents apoptosis. Under normal NADPH concentrations, the protein is found as a dimer and hides the binding site for ASS1. The homodimer binds one molecule of NADPH. Has higher affinity for NADPH than for NADP(+). Binding to NADPH is necessary to form a stable dimer. This Mus musculus (Mouse) protein is NmrA-like family domain-containing protein 1 (Nmral1).